The following is a 120-amino-acid chain: Ribosome-binding factor A (120 aa).

The protein belongs to the RbfA family. Monomer. Binds 30S ribosomal subunits, but not 50S ribosomal subunits or 70S ribosomes.

Its subcellular location is the cytoplasm. Its function is as follows. One of several proteins that assist in the late maturation steps of the functional core of the 30S ribosomal subunit. Associates with free 30S ribosomal subunits (but not with 30S subunits that are part of 70S ribosomes or polysomes). Required for efficient processing of 16S rRNA. May interact with the 5'-terminal helix region of 16S rRNA. In Verminephrobacter eiseniae (strain EF01-2), this protein is Ribosome-binding factor A.